Reading from the N-terminus, the 224-residue chain is tRNA pseudouridine synthase B (224 aa).

Asp-46 functions as the Nucleophile in the catalytic mechanism.

Belongs to the pseudouridine synthase TruB family. Type 1 subfamily.

The enzyme catalyses uridine(55) in tRNA = pseudouridine(55) in tRNA. Its function is as follows. Responsible for synthesis of pseudouridine from uracil-55 in the psi GC loop of transfer RNAs. The polypeptide is tRNA pseudouridine synthase B (Methylococcus capsulatus (strain ATCC 33009 / NCIMB 11132 / Bath)).